The primary structure comprises 396 residues: Elongation factor Tu (396 aa).

The tr-type G domain occupies 10-205; the sequence is KPHVNIGTIG…AVDESIPAPV (196 aa). The interval 19 to 26 is G1; the sequence is GHVDHGKT. Position 19–26 (19–26) interacts with GTP; sequence GHVDHGKT. T26 provides a ligand contact to Mg(2+). Residues 62 to 66 form a G2 region; it reads GITIN. A G3 region spans residues 83–86; that stretch reads DAPG. Residues 83 to 87 and 138 to 141 contribute to the GTP site; these read DAPGH and NKSD. Residues 138-141 form a G4 region; the sequence is NKSD. The tract at residues 175–177 is G5; that stretch reads SAL.

It belongs to the TRAFAC class translation factor GTPase superfamily. Classic translation factor GTPase family. EF-Tu/EF-1A subfamily. In terms of assembly, monomer.

The protein resides in the cytoplasm. It catalyses the reaction GTP + H2O = GDP + phosphate + H(+). Its function is as follows. GTP hydrolase that promotes the GTP-dependent binding of aminoacyl-tRNA to the A-site of ribosomes during protein biosynthesis. The polypeptide is Elongation factor Tu (Mycobacterium leprae (strain Br4923)).